Consider the following 178-residue polypeptide: Interleukin-1 receptor antagonist protein (178 aa).

A signal peptide spans 1–26 (MEICRGPYSHLISLLLILLFRSESAG). The cysteines at positions 92 and 142 are disulfide-linked. N110 carries an N-linked (GlcNAc...) asparagine glycan.

This sequence belongs to the IL-1 family.

It localises to the secreted. Its function is as follows. Anti-inflammatory antagonist of interleukin-1 family of proinflammatory cytokines such as interleukin-1beta/IL1B and interleukin-1alpha/IL1A. Protects from immune dysregulation and uncontrolled systemic inflammation triggered by IL1 for a range of innate stimulatory agents such as pathogens. This Rattus norvegicus (Rat) protein is Interleukin-1 receptor antagonist protein (Il1rn).